A 245-amino-acid chain; its full sequence is Probable phosphatase YE2421 (245 aa).

H7, H9, H15, H40, E73, H101, H131, D192, and H194 together coordinate Zn(2+).

It belongs to the PHP family. In terms of assembly, homotrimer. Zn(2+) serves as cofactor.

In Yersinia enterocolitica serotype O:8 / biotype 1B (strain NCTC 13174 / 8081), this protein is Probable phosphatase YE2421.